The primary structure comprises 165 residues: Fatty acid-binding protein homolog 3 (165 aa).

An N-terminal signal peptide occupies residues 1 to 19 (MNLYLTLFSFCFLAIMAEA).

This sequence belongs to the calycin superfamily. Fatty-acid binding protein (FABP) family. As to expression, expressed in presumptive hypodermal cells by the comma stage and in posterior body wall muscle cells by the two-fold stage. From L1 to adult stages, expression continues in body wall muscle cells adjacent to the pseudocoelom, while hypodermal expression is extinguished.

The protein resides in the secreted. Functionally, may play a role in sequestering potentially toxic fatty acids and their peroxidation products, or it may be involved in the maintenance of the impermeable lipid layer of the eggshell. The polypeptide is Fatty acid-binding protein homolog 3 (lbp-3) (Caenorhabditis elegans).